Here is a 101-residue protein sequence, read N- to C-terminus: Large ribosomal subunit protein bL28 (101 aa).

It belongs to the bacterial ribosomal protein bL28 family.

This chain is Large ribosomal subunit protein bL28, found in Methylorubrum populi (strain ATCC BAA-705 / NCIMB 13946 / BJ001) (Methylobacterium populi).